Reading from the N-terminus, the 239-residue chain is Leucyl/phenylalanyl-tRNA--protein transferase (239 aa).

It belongs to the L/F-transferase family.

It is found in the cytoplasm. The enzyme catalyses N-terminal L-lysyl-[protein] + L-leucyl-tRNA(Leu) = N-terminal L-leucyl-L-lysyl-[protein] + tRNA(Leu) + H(+). It catalyses the reaction N-terminal L-arginyl-[protein] + L-leucyl-tRNA(Leu) = N-terminal L-leucyl-L-arginyl-[protein] + tRNA(Leu) + H(+). It carries out the reaction L-phenylalanyl-tRNA(Phe) + an N-terminal L-alpha-aminoacyl-[protein] = an N-terminal L-phenylalanyl-L-alpha-aminoacyl-[protein] + tRNA(Phe). Functionally, functions in the N-end rule pathway of protein degradation where it conjugates Leu, Phe and, less efficiently, Met from aminoacyl-tRNAs to the N-termini of proteins containing an N-terminal arginine or lysine. The sequence is that of Leucyl/phenylalanyl-tRNA--protein transferase from Aliivibrio fischeri (strain MJ11) (Vibrio fischeri).